The following is a 255-amino-acid chain: Vitamin B12 import ATP-binding protein BtuD (255 aa).

Residues 2 to 240 enclose the ABC transporter domain; sequence MRVKHIAVGS…AGLAEVFKTQ (239 aa). 30–37 provides a ligand contact to ATP; sequence GPNGSGKS.

This sequence belongs to the ABC transporter superfamily. Vitamin B12 importer (TC 3.A.1.13.1) family. The complex is composed of two ATP-binding proteins (BtuD), two transmembrane proteins (BtuC) and a solute-binding protein (BtuF).

It localises to the cell inner membrane. The enzyme catalyses an R-cob(III)alamin(out) + ATP + H2O = an R-cob(III)alamin(in) + ADP + phosphate + H(+). Its function is as follows. Part of the ABC transporter complex BtuCDF involved in vitamin B12 import. Responsible for energy coupling to the transport system. This Vibrio parahaemolyticus serotype O3:K6 (strain RIMD 2210633) protein is Vitamin B12 import ATP-binding protein BtuD.